Consider the following 364-residue polypeptide: Pectinesterase 1 (364 aa).

Residues 1–22 (MSCIAVEAVLLGILLYIPIVLS) form the signal peptide. Asparagine 103 carries N-linked (GlcNAc...) asparagine glycosylation. The active site involves aspartate 220.

The protein belongs to the pectinesterase family. In terms of processing, glycosylated. As to expression, expressed in pollen.

The protein resides in the secreted. It carries out the reaction [(1-&gt;4)-alpha-D-galacturonosyl methyl ester](n) + n H2O = [(1-&gt;4)-alpha-D-galacturonosyl](n) + n methanol + n H(+). It participates in glycan metabolism; pectin degradation; 2-dehydro-3-deoxy-D-gluconate from pectin: step 1/5. In terms of biological role, catalyzes the demethylesterification of homogalacturonan components of pectin. May be involved in pollen tube development. The polypeptide is Pectinesterase 1 (Olea europaea (Common olive)).